Here is a 166-residue protein sequence, read N- to C-terminus: Small ribosomal subunit protein eS10 (166 aa).

Positions 95-166 are disordered; it reads RRQTRPETAR…FGRGRGQQPQ (72 aa). The segment covering 98–129 has biased composition (basic and acidic residues); that stretch reads TRPETARPRPKGLEGERPARLARGEGDRDAYR. A compositionally biased stretch (low complexity) spans 143–154; the sequence is AGAGAATEFQFR. The segment covering 155 to 166 has biased composition (gly residues); sequence GGFGRGRGQQPQ.

It belongs to the eukaryotic ribosomal protein eS10 family. As to quaternary structure, component of the small ribosomal subunit.

It localises to the cytoplasm. Its subcellular location is the nucleus. The protein resides in the nucleolus. In terms of biological role, component of the 40S ribosomal subunit. The ribosome is a large ribonucleoprotein complex responsible for the synthesis of proteins in the cell. The protein is Small ribosomal subunit protein eS10 (rps10) of Ictalurus punctatus (Channel catfish).